The primary structure comprises 147 residues: Large ribosomal subunit protein uL15 (147 aa).

Positions 1 to 20 are enriched in basic and acidic residues; it reads MTLRLNDLKPADGARTERTR. Residues 1–61 are disordered; it reads MTLRLNDLKP…GFEGGQTPMQ (61 aa). A compositionally biased stretch (gly residues) spans 23-33; that stretch reads RGIGSGLGKTA. Basic residues predominate over residues 34-47; the sequence is GRGHKGSFARKGGG.

Belongs to the universal ribosomal protein uL15 family. Part of the 50S ribosomal subunit.

In terms of biological role, binds to the 23S rRNA. This Xanthomonas axonopodis pv. citri (strain 306) protein is Large ribosomal subunit protein uL15.